The chain runs to 586 residues: Phosphatase and actin regulator 1 (586 aa).

The short motif at 62–83 (RRRSKFATLGRLFKPWKWRKKK) is the Nuclear localization signal element. Residues 92-117 (AALERKISMRQSREELIKRGVLKEMY) form an RPEL 1 repeat. The tract at residues 373–414 (ECEDDKENVPHETSYDDSSCLYSRDEEEDDDDDDDDEDDDSS) is disordered. Residues 397-413 (DEEEDDDDDDDDEDDDS) show a composition bias toward acidic residues. RPEL repeat units follow at residues 428–453 (DSLA…PMQT), 466–491 (TKLT…KPRN), and 504–529 (RRLT…ISFS).

Belongs to the phosphatase and actin regulator family. In terms of assembly, interacts (via RPEL repeats) with ACTA1.

The protein localises to the cytoplasm. It localises to the synapse. Its subcellular location is the nucleus. In terms of biological role, binds actin monomers (G actin) and plays a role in the reorganization of the actin cytoskeleton and in formation of actin stress fibers. The protein is Phosphatase and actin regulator 1 (phactr1) of Xenopus laevis (African clawed frog).